Reading from the N-terminus, the 124-residue chain is Ribonuclease pancreatic (124 aa).

The span at K1–M13 shows a compositional bias: basic and acidic residues. The segment at K1–N24 is disordered. Residues K7 and R10 each coordinate substrate. Residue H12 is the Proton acceptor of the active site. Cystine bridges form between C26–C84, C40–C95, C58–C110, and C65–C72. Substrate contacts are provided by residues K41–T45, K66, and R85. The Proton donor role is filled by H119.

The protein belongs to the pancreatic ribonuclease family. In terms of assembly, monomer. Interacts with and forms tight 1:1 complexes with RNH1. Dimerization of two such complexes may occur. Interaction with RNH1 inhibits this protein. As to expression, pancreas.

It localises to the secreted. It carries out the reaction an [RNA] containing cytidine + H2O = an [RNA]-3'-cytidine-3'-phosphate + a 5'-hydroxy-ribonucleotide-3'-[RNA].. It catalyses the reaction an [RNA] containing uridine + H2O = an [RNA]-3'-uridine-3'-phosphate + a 5'-hydroxy-ribonucleotide-3'-[RNA].. Functionally, endonuclease that catalyzes the cleavage of RNA on the 3' side of pyrimidine nucleotides. Acts on single-stranded and double-stranded RNA. This Connochaetes taurinus (Blue wildebeest) protein is Ribonuclease pancreatic (RNASE1).